The sequence spans 204 residues: Tat proofreading chaperone DmsD (204 aa).

Belongs to the TorD/DmsD family. DmsD subfamily. In terms of assembly, monomer in solution.

In terms of biological role, required for biogenesis/assembly of DMSO reductase, but not for the interaction of the DmsA signal peptide with the Tat system. May be part of a chaperone cascade complex that facilitates a folding-maturation pathway for the substrate protein. This chain is Tat proofreading chaperone DmsD, found in Salmonella typhimurium (strain LT2 / SGSC1412 / ATCC 700720).